The chain runs to 459 residues: tRNA modification GTPase MnmE (459 aa).

(6S)-5-formyl-5,6,7,8-tetrahydrofolate contacts are provided by R23, E88, and R127. The TrmE-type G domain maps to 223–381 (GLNTVIIGKP…LKDTIENMFA (159 aa)). N233 contacts K(+). Residues 233-238 (NVGKSS), 252-258 (TDIPGTT), and 277-280 (DTAG) contribute to the GTP site. Position 237 (S237) interacts with Mg(2+). Positions 252, 254, and 257 each coordinate K(+). A Mg(2+)-binding site is contributed by T258. K459 is a binding site for (6S)-5-formyl-5,6,7,8-tetrahydrofolate.

It belongs to the TRAFAC class TrmE-Era-EngA-EngB-Septin-like GTPase superfamily. TrmE GTPase family. In terms of assembly, homodimer. Heterotetramer of two MnmE and two MnmG subunits. K(+) serves as cofactor.

The protein localises to the cytoplasm. Its function is as follows. Exhibits a very high intrinsic GTPase hydrolysis rate. Involved in the addition of a carboxymethylaminomethyl (cmnm) group at the wobble position (U34) of certain tRNAs, forming tRNA-cmnm(5)s(2)U34. The polypeptide is tRNA modification GTPase MnmE (Clostridium acetobutylicum (strain ATCC 824 / DSM 792 / JCM 1419 / IAM 19013 / LMG 5710 / NBRC 13948 / NRRL B-527 / VKM B-1787 / 2291 / W)).